The following is a 238-amino-acid chain: Uridylate kinase (238 aa).

12–15 (KLSG) contributes to the ATP binding site. Position 54 (glycine 54) interacts with UMP. Glycine 55 and arginine 59 together coordinate ATP. UMP-binding positions include aspartate 74 and 135–142 (TGNPFFTT). 3 residues coordinate ATP: threonine 162, tyrosine 168, and aspartate 171.

The protein belongs to the UMP kinase family. Homohexamer.

Its subcellular location is the cytoplasm. The enzyme catalyses UMP + ATP = UDP + ADP. The protein operates within pyrimidine metabolism; CTP biosynthesis via de novo pathway; UDP from UMP (UMPK route): step 1/1. Inhibited by UTP. Its function is as follows. Catalyzes the reversible phosphorylation of UMP to UDP. The sequence is that of Uridylate kinase from Bordetella avium (strain 197N).